The following is a 136-amino-acid chain: Acyl carrier protein 2, chloroplastic (136 aa).

The N-terminal 51 residues, 1–51 (MASIAASASISLQARPRQLAIAASQVKSFSNGRRSSLSFNLRQLPTRLTVS), are a transit peptide targeting the chloroplast. The Carrier domain maps to 56–131 (PETVDKVCAV…QAAALIEELL (76 aa)). Ser91 is modified (O-(pantetheine 4'-phosphoryl)serine).

Belongs to the acyl carrier protein (ACP) family. 4'-phosphopantetheine is transferred from CoA to a specific serine of apo-ACP by acpS. This modification is essential for activity because fatty acids are bound in thioester linkage to the sulfhydryl of the prosthetic group.

It is found in the plastid. The protein localises to the chloroplast. Carrier of the growing fatty acid chain in fatty acid biosynthesis. The protein is Acyl carrier protein 2, chloroplastic (ACP2) of Arabidopsis thaliana (Mouse-ear cress).